The following is a 185-amino-acid chain: Crossover junction endodeoxyribonuclease RuvC (185 aa).

Residues Asp7, Glu66, and Asp137 contribute to the active site. Mg(2+) contacts are provided by Asp7, Glu66, and Asp137.

It belongs to the RuvC family. As to quaternary structure, homodimer which binds Holliday junction (HJ) DNA. The HJ becomes 2-fold symmetrical on binding to RuvC with unstacked arms; it has a different conformation from HJ DNA in complex with RuvA. In the full resolvosome a probable DNA-RuvA(4)-RuvB(12)-RuvC(2) complex forms which resolves the HJ. Requires Mg(2+) as cofactor.

Its subcellular location is the cytoplasm. It catalyses the reaction Endonucleolytic cleavage at a junction such as a reciprocal single-stranded crossover between two homologous DNA duplexes (Holliday junction).. Its function is as follows. The RuvA-RuvB-RuvC complex processes Holliday junction (HJ) DNA during genetic recombination and DNA repair. Endonuclease that resolves HJ intermediates. Cleaves cruciform DNA by making single-stranded nicks across the HJ at symmetrical positions within the homologous arms, yielding a 5'-phosphate and a 3'-hydroxyl group; requires a central core of homology in the junction. The consensus cleavage sequence is 5'-(A/T)TT(C/G)-3'. Cleavage occurs on the 3'-side of the TT dinucleotide at the point of strand exchange. HJ branch migration catalyzed by RuvA-RuvB allows RuvC to scan DNA until it finds its consensus sequence, where it cleaves and resolves the cruciform DNA. The polypeptide is Crossover junction endodeoxyribonuclease RuvC (Anaeromyxobacter sp. (strain K)).